A 370-amino-acid chain; its full sequence is Glucan endo-1,3-beta-glucosidase (370 aa).

An N-terminal signal peptide occupies residues Met1–Ala32. Residue Gln33 is modified to Pyrrolidone carboxylic acid. Glu127 acts as the Proton donor in catalysis. Glu272 (nucleophile) is an active-site residue. The propeptide at Gly348–Met370 is removed in mature form. An N-linked (GlcNAc...) asparagine glycan is attached at Asn361.

The protein belongs to the glycosyl hydrolase 17 family. Constitutively expressed in seedling roots.

The enzyme catalyses Hydrolysis of (1-&gt;3)-beta-D-glucosidic linkages in (1-&gt;3)-beta-D-glucans.. Functionally, implicated in the defense of plants against pathogens. The chain is Glucan endo-1,3-beta-glucosidase from Pisum sativum (Garden pea).